Here is a 129-residue protein sequence, read N- to C-terminus: uncharacterized protein (129 aa).

The segment covering 84-98 has biased composition (basic residues); sequence QKTVSKKYKSRKGRR. A disordered region spans residues 84–129; that stretch reads QKTVSKKYKSRKGRRYTRERNISSEKNKTDKSHKVRVGKIQNINND. Residues 99-115 show a composition bias toward basic and acidic residues; the sequence is YTRERNISSEKNKTDKS.

This is an uncharacterized protein from Acanthamoeba polyphaga mimivirus (APMV).